A 198-amino-acid chain; its full sequence is Ribonuclease HII (198 aa).

In terms of domain architecture, RNase H type-2 spans 2 to 191; that stretch reads VLECGVDETG…IRELLVGKDN (190 aa). A divalent metal cation contacts are provided by Asp8, Glu9, and Asp100.

It belongs to the RNase HII family. Requires Mn(2+) as cofactor. It depends on Mg(2+) as a cofactor.

The protein resides in the cytoplasm. The enzyme catalyses Endonucleolytic cleavage to 5'-phosphomonoester.. Functionally, endonuclease that specifically degrades the RNA of RNA-DNA hybrids. This chain is Ribonuclease HII, found in Desulforamulus reducens (strain ATCC BAA-1160 / DSM 100696 / MI-1) (Desulfotomaculum reducens).